Reading from the N-terminus, the 373-residue chain is Phosphoserine aminotransferase (373 aa).

R46 provides a ligand contact to L-glutamate. Pyridoxal 5'-phosphate contacts are provided by F104, T150, D172, and Q195. K196 carries the N6-(pyridoxal phosphate)lysine modification. A pyridoxal 5'-phosphate-binding site is contributed by 247–248; sequence NT.

This sequence belongs to the class-V pyridoxal-phosphate-dependent aminotransferase family. SerC subfamily. As to quaternary structure, homodimer. Requires pyridoxal 5'-phosphate as cofactor.

It localises to the cytoplasm. It catalyses the reaction O-phospho-L-serine + 2-oxoglutarate = 3-phosphooxypyruvate + L-glutamate. The enzyme catalyses 4-(phosphooxy)-L-threonine + 2-oxoglutarate = (R)-3-hydroxy-2-oxo-4-phosphooxybutanoate + L-glutamate. It participates in amino-acid biosynthesis; L-serine biosynthesis; L-serine from 3-phospho-D-glycerate: step 2/3. Its pathway is cofactor biosynthesis; pyridoxine 5'-phosphate biosynthesis; pyridoxine 5'-phosphate from D-erythrose 4-phosphate: step 3/5. Functionally, catalyzes the reversible conversion of 3-phosphohydroxypyruvate to phosphoserine and of 3-hydroxy-2-oxo-4-phosphonooxybutanoate to phosphohydroxythreonine. This chain is Phosphoserine aminotransferase, found in Rhodococcus opacus (strain B4).